The chain runs to 396 residues: MELDHRTSGGLHAYPGPRGGQVAKPNVILQIGKCRAEMLEHVRRTHRHLLAEVSKQVERELKGLHRSVGKLESNLDGYVPTSDSQRWKKSIKACLCRCQETIANLERWVKREMHVWREVFYRLERWADRLESTGGKYPVGSESARHTVSVGVGGPESYCHEADGYDYTVSPYAITPPPAAGELPGQEPAEAQQYQPWVPGEDGQPSPGVDTQIFEDPREFLSHLEEYLRQVGGSEEYWLSQIQNHMNGPAKKWWEFKQGSVKNWVEFKKEFLQYSEGTLSREAIQRELDLPQKQGEPLDQFLWRKRDLYQTLYVDADEEEIIQYVVGTLQPKLKRFLRHPLPKTLEQLIQRGMEVQDDLEQAAEPAGPHLPVEDEAETLTPAPNSESVASDRTQPE.

A coiled-coil region spans residues 54–78 (SKQVERELKGLHRSVGKLESNLDGY). Residues 89 to 100 (KSIKACLCRCQE) are interaction with SH3GL1 or SH3GL3. The segment at 195 to 214 (QPWVPGEDGQPSPGVDTQIF) is interaction with DNM2. Ser-260 bears the Phosphoserine mark. Residues Lys-268 and Lys-269 each participate in a glycyl lysine isopeptide (Lys-Gly) (interchain with G-Cter in ubiquitin) cross-link. Residue Thr-278 is modified to Phosphothreonine. The interval 356-396 (QDDLEQAAEPAGPHLPVEDEAETLTPAPNSESVASDRTQPE) is disordered. A compositionally biased stretch (polar residues) spans 381–396 (PAPNSESVASDRTQPE).

The protein belongs to the ARC/ARG3.1 family. As to quaternary structure, homooligomer; homooligomerizes into virion-like capsids. Interacts with SH3GL1/endophilin-2, SH3GL3/endophilin-3 and DNM2/DYN2. Interacts with CAMK2B (in the kinase inactive state); leading to target ARC to inactive synapses. Interacts with PSEN1. In terms of processing, palmitoylation anchors the protein into the membrane by allowing direct insertion into the hydrophobic core of the lipid bilayer. Ubiquitinated by UBE3A, leading to its degradation by the proteasome, thereby promoting AMPA receptors (AMPARs) expression at synapses. Ubiquitinated by RNF216 at Lys-268 and Lys-269 limiting ARC protein levels induced by synaptic activity and thus regulating ARC-dependent forms of synaptic plasticity. Post-translationally, phosphorylation at Ser-260 by CaMK2 prevents homooligomerization into virion-like capsids by disrupting an interaction surface essential for high-order oligomerization. Phosphorylation by CaMK2 inhibits synaptic activity.

It localises to the extracellular vesicle membrane. The protein localises to the postsynaptic cell membrane. Its subcellular location is the synapse. The protein resides in the postsynaptic density. It is found in the early endosome membrane. It localises to the cell projection. The protein localises to the dendrite. Its subcellular location is the cytoplasm. The protein resides in the cytoskeleton. It is found in the cell cortex. It localises to the dendritic spine. The protein localises to the cytoplasmic vesicle. Its subcellular location is the secretory vesicle. The protein resides in the acrosome. It is found in the clathrin-coated vesicle membrane. In terms of biological role, master regulator of synaptic plasticity that self-assembles into virion-like capsids that encapsulate RNAs and mediate intercellular RNA transfer in the nervous system. ARC protein is released from neurons in extracellular vesicles that mediate the transfer of ARC mRNA into new target cells, where ARC mRNA can undergo activity-dependent translation. ARC capsids are endocytosed and are able to transfer ARC mRNA into the cytoplasm of neurons. Acts as a key regulator of synaptic plasticity: required for protein synthesis-dependent forms of long-term potentiation (LTP) and depression (LTD) and for the formation of long-term memory. Regulates synaptic plasticity by promoting endocytosis of AMPA receptors (AMPARs) in response to synaptic activity: this endocytic pathway maintains levels of surface AMPARs in response to chronic changes in neuronal activity through synaptic scaling, thereby contributing to neuronal homeostasis. Acts as a postsynaptic mediator of activity-dependent synapse elimination in the developing cerebellum by mediating elimination of surplus climbing fiber synapses. Accumulates at weaker synapses, probably to prevent their undesired enhancement. This suggests that ARC-containing virion-like capsids may be required to eliminate synaptic material. Required to transduce experience into long-lasting changes in visual cortex plasticity and for long-term memory. Involved in postsynaptic trafficking and processing of amyloid-beta A4 (APP) via interaction with PSEN1. In addition to its role in synapses, also involved in the regulation of the immune system: specifically expressed in skin-migratory dendritic cells and regulates fast dendritic cell migration, thereby regulating T-cell activation. This chain is Activity-regulated cytoskeleton-associated protein, found in Homo sapiens (Human).